The following is a 159-amino-acid chain: SsrA-binding protein (159 aa).

Residues 133–147 show a composition bias toward basic and acidic residues; it reads KRQDLAKRDAQREMA. Positions 133 to 159 are disordered; the sequence is KRQDLAKRDAQREMARAAGRRSKGMDD. The span at 150-159 shows a compositional bias: basic residues; the sequence is AGRRSKGMDD.

It belongs to the SmpB family.

It is found in the cytoplasm. Required for rescue of stalled ribosomes mediated by trans-translation. Binds to transfer-messenger RNA (tmRNA), required for stable association of tmRNA with ribosomes. tmRNA and SmpB together mimic tRNA shape, replacing the anticodon stem-loop with SmpB. tmRNA is encoded by the ssrA gene; the 2 termini fold to resemble tRNA(Ala) and it encodes a 'tag peptide', a short internal open reading frame. During trans-translation Ala-aminoacylated tmRNA acts like a tRNA, entering the A-site of stalled ribosomes, displacing the stalled mRNA. The ribosome then switches to translate the ORF on the tmRNA; the nascent peptide is terminated with the 'tag peptide' encoded by the tmRNA and targeted for degradation. The ribosome is freed to recommence translation, which seems to be the essential function of trans-translation. The chain is SsrA-binding protein from Salinispora arenicola (strain CNS-205).